We begin with the raw amino-acid sequence, 584 residues long: Segmentation polarity homeobox protein engrailed (584 aa).

Disordered stretches follow at residues 1 to 27 (MALEDRCSPQSAPSPPGCLPHSPPQQH), 141 to 198 (EESD…SKPS), 343 to 380 (IGQAQSTTPVTTPSSRPSQLASPPPASNASTISSSSST), 392 to 451 (CSSA…GGKN), and 465 to 492 (DRPSSGPRYRRPKQPKDKTNDEKRPRTA). Residues 12 to 23 (APSPPGCLPHSP) show a composition bias toward pro residues. A compositionally biased stretch (acidic residues) spans 160–174 (TEEDEEEDDDIDVDD). Residues 189–198 (HQQSKQSKPS) are compositionally biased toward polar residues. Low complexity-rich tracts occupy residues 348-380 (STTPVTTPSSRPSQLASPPPASNASTISSSSST) and 392-405 (CSSAASSLNSSPSS). The span at 478-489 (QPKDKTNDEKRP) shows a compositional bias: basic and acidic residues. Positions 486–545 (EKRPRTAFSSEQLARLKREFNENRYLTERRRQQLSSELGLNEAQIKIWFQNKRAKIKKST) form a DNA-binding region, homeobox.

The protein belongs to the engrailed homeobox family.

It localises to the nucleus. Its function is as follows. This protein specifies the body segmentation pattern. It is required for the development of the central nervous system. Transcriptional regulator that repress activated promoters. In Drosophila virilis (Fruit fly), this protein is Segmentation polarity homeobox protein engrailed (en).